A 570-amino-acid chain; its full sequence is Sulfite reductase [NADPH] hemoprotein beta-component (570 aa).

[4Fe-4S] cluster is bound by residues Cys434, Cys440, Cys479, and Cys483. Residue Cys483 participates in siroheme binding.

The protein belongs to the nitrite and sulfite reductase 4Fe-4S domain family. Alpha(8)-beta(8). The alpha component is a flavoprotein, the beta component is a hemoprotein. Siroheme serves as cofactor. Requires [4Fe-4S] cluster as cofactor.

It carries out the reaction hydrogen sulfide + 3 NADP(+) + 3 H2O = sulfite + 3 NADPH + 4 H(+). It functions in the pathway sulfur metabolism; hydrogen sulfide biosynthesis; hydrogen sulfide from sulfite (NADPH route): step 1/1. Component of the sulfite reductase complex that catalyzes the 6-electron reduction of sulfite to sulfide. This is one of several activities required for the biosynthesis of L-cysteine from sulfate. The chain is Sulfite reductase [NADPH] hemoprotein beta-component from Salmonella arizonae (strain ATCC BAA-731 / CDC346-86 / RSK2980).